The sequence spans 139 residues: D-ribose pyranase (139 aa).

His-20 acts as the Proton donor in catalysis. Substrate-binding positions include Asp-28, His-106, and 128–130; that span reads YAN.

Belongs to the RbsD / FucU family. RbsD subfamily. In terms of assembly, homodecamer.

The protein localises to the cytoplasm. The catalysed reaction is beta-D-ribopyranose = beta-D-ribofuranose. Its pathway is carbohydrate metabolism; D-ribose degradation; D-ribose 5-phosphate from beta-D-ribopyranose: step 1/2. Catalyzes the interconversion of beta-pyran and beta-furan forms of D-ribose. The polypeptide is D-ribose pyranase (Vibrio vulnificus (strain CMCP6)).